The primary structure comprises 423 residues: Deferrochelatase (423 aa).

The segment at residues 1–35 (MQYEDENGVNEPSRRRLLKGIGALALAGSCPVAHA) is a signal peptide (tat-type signal). Heme b-binding positions include 236-238 (GTA), histidine 329, 334-336 (NPR), and arginine 347.

Belongs to the DyP-type peroxidase family. EfeB subfamily. In terms of assembly, homodimer. Part of a ferrous iron transporter composed of EfeU, EfeO and EfeB. Heme b serves as cofactor. Predicted to be exported by the Tat system. The position of the signal peptide cleavage has not been experimentally proven.

The protein resides in the periplasm. It carries out the reaction heme b + 2 H(+) = protoporphyrin IX + Fe(2+). Its function is as follows. Involved in the recovery of exogenous heme iron. Extracts iron from heme while preserving the protoporphyrin ring intact. The protein is Deferrochelatase (efeB) of Escherichia coli O6:K15:H31 (strain 536 / UPEC).